Consider the following 395-residue polypeptide: S-adenosylmethionine synthase (395 aa).

Residue H16 participates in ATP binding. D18 is a binding site for Mg(2+). A K(+)-binding site is contributed by E44. E57 and Q100 together coordinate L-methionine. Residues 100–110 (QSTDIAQGVNE) form a flexible loop region. ATP-binding positions include 174 to 176 (DAK), 241 to 242 (RF), D250, 256 to 257 (RK), A273, and K277. Residue D250 coordinates L-methionine. K281 contacts L-methionine.

The protein belongs to the AdoMet synthase family. In terms of assembly, homotetramer; dimer of dimers. It depends on Mg(2+) as a cofactor. Requires K(+) as cofactor.

The protein resides in the cytoplasm. It catalyses the reaction L-methionine + ATP + H2O = S-adenosyl-L-methionine + phosphate + diphosphate. The protein operates within amino-acid biosynthesis; S-adenosyl-L-methionine biosynthesis; S-adenosyl-L-methionine from L-methionine: step 1/1. In terms of biological role, catalyzes the formation of S-adenosylmethionine (AdoMet) from methionine and ATP. The overall synthetic reaction is composed of two sequential steps, AdoMet formation and the subsequent tripolyphosphate hydrolysis which occurs prior to release of AdoMet from the enzyme. This chain is S-adenosylmethionine synthase, found in Streptococcus uberis (strain ATCC BAA-854 / 0140J).